A 204-amino-acid polypeptide reads, in one-letter code: Casparian strip membrane protein 2 (204 aa).

The Cytoplasmic portion of the chain corresponds to 1-42; the sequence is MKNESTTIDVPAESSSAMKGKAPLIGVARDHTTSGSGGYNRG. The helical transmembrane segment at 43 to 63 threads the bilayer; it reads LSIFDFLLRLAAIVAALAAAA. The Extracellular portion of the chain corresponds to 64 to 92; that stretch reads TMGTSDETLPFFTQFLQFEASYDDLPTFQ. The chain crosses the membrane as a helical span at residues 93–113; that stretch reads FFVIAMALVGGYLVLSLPISV. The Cytoplasmic portion of the chain corresponds to 114–125; the sequence is VTILRPLATAPR. A helical transmembrane segment spans residues 126 to 146; sequence LLLLVLDTAVLALNTAAASSA. Over 147-178 the chain is Extracellular; it reads AAISYLAHSGNQNTNWLPICQQFGDFCQKSSG. The chain crosses the membrane as a helical span at residues 179-199; the sequence is AVVSAFISVVFFTILVVISGV. Over 200 to 204 the chain is Cytoplasmic; that stretch reads ALKRH.

It belongs to the Casparian strip membrane proteins (CASP) family. In terms of assembly, homodimer and heterodimers.

It is found in the cell membrane. Regulates membrane-cell wall junctions and localized cell wall deposition. Required for establishment of the Casparian strip membrane domain (CSD) and the subsequent formation of Casparian strips, a cell wall modification of the root endodermis that determines an apoplastic barrier between the intraorganismal apoplasm and the extraorganismal apoplasm and prevents lateral diffusion. This chain is Casparian strip membrane protein 2, found in Arabidopsis lyrata subsp. lyrata (Lyre-leaved rock-cress).